We begin with the raw amino-acid sequence, 468 residues long: H(+)/Cl(-) exchange transporter ClcA (468 aa).

At methionine 1 to proline 30 the chain is on the cytoplasmic side. The helical transmembrane segment at phenylalanine 31–lysine 67 threads the bilayer. Topologically, residues serine 68–leucine 74 are periplasmic. The chain crosses the membrane as a helical span at residues proline 75–phenylalanine 98. Residues glycine 104–proline 108 carry the Selectivity filter part_1 motif. Chloride is bound at residue serine 105. Positions isoleucine 107–methionine 114 form an intramembrane region, helical. The Cytoplasmic segment spans residues aspartate 115 to arginine 121. The next 2 helical transmembrane spans lie at tryptophan 122–serine 139 and glutamate 146–phenylalanine 164. Residues glycine 144–proline 148 carry the Selectivity filter part_2 motif. Residues arginine 165–serine 174 lie on the Cytoplasmic side of the membrane. Intramembrane regions (helical) lie at residues leucine 175 to alanine 187 and proline 191 to isoleucine 199. Residues glutamate 200–serine 212 are Cytoplasmic-facing. A helical transmembrane segment spans residues valine 213–isoleucine 230. Residues asparagine 231–leucine 250 lie on the Periplasmic side of the membrane. The chain crosses the membrane as a helical span at residues glycine 251 to valine 279. The Cytoplasmic portion of the chain corresponds to lysine 280–aspartate 285. A helical membrane pass occupies residues arginine 286–valine 307. Over proline 308–glycine 327 the chain is Periplasmic. A run of 2 helical transmembrane segments spans residues alanine 328 to glycine 347 and glycine 353 to lysine 374. Residues glycine 353–proline 357 carry the Selectivity filter part_3 motif. 2 residues coordinate chloride: isoleucine 354 and phenylalanine 355. Residues methionine 375–proline 384 lie on the Periplasmic side of the membrane. An intramembrane region (helical) is located at residues glycine 385–threonine 399. The segment at residues valine 400–alanine 402 is an intramembrane region (note=Loop between two helices). Positions proline 403–threonine 414 form an intramembrane region, helical. The note=Loop between two helices intramembrane region spans asparagine 415–leucine 419. A helical membrane pass occupies residues isoleucine 420 to leucine 436. Residues leucine 437–serine 468 are Cytoplasmic-facing. Tyrosine 443 is a chloride binding site.

The protein belongs to the chloride channel (TC 2.A.49) family. ClcA subfamily. As to quaternary structure, homodimer.

The protein localises to the cell inner membrane. It catalyses the reaction 2 chloride(in) + H(+)(out) = 2 chloride(out) + H(+)(in). Functionally, proton-coupled chloride transporter. Functions as antiport system and exchanges two chloride ions for 1 proton. Probably acts as an electrical shunt for an outwardly-directed proton pump that is linked to amino acid decarboxylation, as part of the extreme acid resistance (XAR) response. The polypeptide is H(+)/Cl(-) exchange transporter ClcA (Vibrio cholerae serotype O1 (strain ATCC 39315 / El Tor Inaba N16961)).